The following is a 308-amino-acid chain: MARANGRSQNLRDKLDGNELDLSLSDLSEVPVRDLVAIPKATALDLSCNKLTSLPDDFCNLSYIVRLDLSKNQIAQLPSEFGRLVNLQHLDLLQNRIVALPVSFAQLKSLKWLDLKDNPLKPALAKVAGDCLDEKQCKECAQGVLQYMKSVQSDHERELQRKLQLDKDRKQRLEAQQRVKEEQDRELRKRMKQQQKERKRRDYNAMQEAQKALNNNKKKAEEEPSENHKPVPTPKEKKLARRQSRLRKIACILLFGLMVALLGVVACRFTDLKTFEVCRSVNAVYKETLSALHSNPVLERFLQDPSSQ.

Residues 1–248 (MARANGRSQN…LARRQSRLRK (248 aa)) lie on the Cytoplasmic side of the membrane. LRR repeat units lie at residues 10-31 (NLRDKLDGNELDLSLSDLSEVP), 40-61 (KATALDLSCNKLTSLPDDFCNL), 63-84 (YIVRLDLSKNQIAQLPSEFGRL), 86-107 (NLQHLDLLQNRIVALPVSFAQL), and 109-128 (SLKWLDLKDNPLKPALAKVA). The stretch at 154–223 (DHERELQRKL…NNNKKKAEEE (70 aa)) forms a coiled coil. 3 stretches are compositionally biased toward basic and acidic residues: residues 170–187 (KQRLEAQQRVKEEQDREL), 194–203 (QQKERKRRDY), and 218–237 (KKAEEEPSENHKPVPTPKEK). Residues 170 to 240 (KQRLEAQQRV…VPTPKEKKLA (71 aa)) form a disordered region. A helical membrane pass occupies residues 249–269 (IACILLFGLMVALLGVVACRF). At 270–308 (TDLKTFEVCRSVNAVYKETLSALHSNPVLERFLQDPSSQ) the chain is on the lumenal side.

In terms of assembly, interacts with SGO1.

The protein localises to the microsome membrane. It is found in the endoplasmic reticulum membrane. It localises to the nucleus envelope. Its function is as follows. Required for nuclear import of FGF1. This is Leucine-rich repeat-containing protein 59 (lrrc59) from Xenopus tropicalis (Western clawed frog).